Here is a 573-residue protein sequence, read N- to C-terminus: SHC-transforming protein 2 (573 aa).

A PID domain is found at 125 to 309; sequence LGPGVSYIVR…LEELAWGDDD (185 aa). Positions 310 to 477 are CH1; that stretch reads AAADHNYYNS…PTEEQLRQEP (168 aa). Residues Y316, Y317, and Y395 each carry the phosphotyrosine modification. The 92-residue stretch at 478–569 folds into the SH2 domain; the sequence is WYHGRMSRRA…ESELHLRGVV (92 aa).

In terms of assembly, interacts with the Trk receptors in a phosphotyrosine-dependent manner and MEGF12. Once activated, binds to GRB2. In terms of processing, phosphorylated on tyrosine by the Trk receptors. Expressed in brain. Expressed at high level in the hypothalamus and at low level in the caudate nucleus.

Functionally, signaling adapter that couples activated growth factor receptors to signaling pathway in neurons. Involved in the signal transduction pathways of neurotrophin-activated Trk receptors in cortical neurons. The chain is SHC-transforming protein 2 (Shc2) from Mus musculus (Mouse).